The primary structure comprises 456 residues: uncharacterized protein (456 aa).

In terms of domain architecture, TRAM spans 3–61 (TIKKNEVKTGKVIDLTHEGHGVVKVDRYPIFIPNALIDEEIKFKLIKVKKNFAIGKLIE). Residues cysteine 74, cysteine 80, cysteine 83, and cysteine 162 each coordinate [4Fe-4S] cluster. 4 residues coordinate S-adenosyl-L-methionine: glutamine 286, tyrosine 315, glutamate 336, and aspartate 384. Cysteine 411 functions as the Nucleophile in the catalytic mechanism.

The protein belongs to the class I-like SAM-binding methyltransferase superfamily. RNA M5U methyltransferase family.

This is an uncharacterized protein from Staphylococcus epidermidis (strain ATCC 35984 / DSM 28319 / BCRC 17069 / CCUG 31568 / BM 3577 / RP62A).